The following is a 628-amino-acid chain: Chaperone protein HtpG (628 aa).

Residues 1–334 (MTTIDTASET…SEDLPLNLSR (334 aa)) are a; substrate-binding. Residues 335 to 550 (EMLQNNPQLA…GFGPDRELEK (216 aa)) are b. Residues 551 to 628 (MLARANKGAA…LVLRGVVAHG (78 aa)) are c.

This sequence belongs to the heat shock protein 90 family. As to quaternary structure, homodimer.

It localises to the cytoplasm. Molecular chaperone. Has ATPase activity. The polypeptide is Chaperone protein HtpG (Rhodopseudomonas palustris (strain HaA2)).